The following is a 477-amino-acid chain: Bifunctional protein HldE (477 aa).

The segment at 1–318 (MKVTLSEFER…ENAVRGRADT (318 aa)) is ribokinase. At lysine 179 the chain carries N6-acetyllysine. 195 to 198 (NLSE) is an ATP binding site. Aspartate 264 is an active-site residue. A cytidylyltransferase region spans residues 344-477 (MTNGVFDILH…IKKIQQDKKG (134 aa)).

It in the N-terminal section; belongs to the carbohydrate kinase PfkB family. This sequence in the C-terminal section; belongs to the cytidylyltransferase family. As to quaternary structure, homodimer.

The enzyme catalyses D-glycero-beta-D-manno-heptose 7-phosphate + ATP = D-glycero-beta-D-manno-heptose 1,7-bisphosphate + ADP + H(+). It catalyses the reaction D-glycero-beta-D-manno-heptose 1-phosphate + ATP + H(+) = ADP-D-glycero-beta-D-manno-heptose + diphosphate. Its pathway is nucleotide-sugar biosynthesis; ADP-L-glycero-beta-D-manno-heptose biosynthesis; ADP-L-glycero-beta-D-manno-heptose from D-glycero-beta-D-manno-heptose 7-phosphate: step 1/4. It participates in nucleotide-sugar biosynthesis; ADP-L-glycero-beta-D-manno-heptose biosynthesis; ADP-L-glycero-beta-D-manno-heptose from D-glycero-beta-D-manno-heptose 7-phosphate: step 3/4. Catalyzes the phosphorylation of D-glycero-D-manno-heptose 7-phosphate at the C-1 position to selectively form D-glycero-beta-D-manno-heptose-1,7-bisphosphate. Its function is as follows. Catalyzes the ADP transfer from ATP to D-glycero-beta-D-manno-heptose 1-phosphate, yielding ADP-D-glycero-beta-D-manno-heptose. The sequence is that of Bifunctional protein HldE from Shigella boydii serotype 18 (strain CDC 3083-94 / BS512).